A 72-amino-acid polypeptide reads, in one-letter code: Translation initiation factor IF-1 (72 aa).

The 72-residue stretch at M1–K72 folds into the S1-like domain.

This sequence belongs to the IF-1 family. In terms of assembly, component of the 30S ribosomal translation pre-initiation complex which assembles on the 30S ribosome in the order IF-2 and IF-3, IF-1 and N-formylmethionyl-tRNA(fMet); mRNA recruitment can occur at any time during PIC assembly.

Its subcellular location is the cytoplasm. In terms of biological role, one of the essential components for the initiation of protein synthesis. Stabilizes the binding of IF-2 and IF-3 on the 30S subunit to which N-formylmethionyl-tRNA(fMet) subsequently binds. Helps modulate mRNA selection, yielding the 30S pre-initiation complex (PIC). Upon addition of the 50S ribosomal subunit IF-1, IF-2 and IF-3 are released leaving the mature 70S translation initiation complex. This Xylella fastidiosa (strain 9a5c) protein is Translation initiation factor IF-1.